A 362-amino-acid polypeptide reads, in one-letter code: Bifunctional chorismate mutase/prephenate dehydratase (362 aa).

Residues 1-92 (MEELKELRKE…ACLSLEKKIK (92 aa)) enclose the Chorismate mutase domain. Positions 8, 25, 36, and 49 each coordinate substrate. The Prephenate dehydratase domain occupies 93–267 (VAYLGPKATF…NFTRFLVIAK (175 aa)). An ACT domain is found at 279-356 (SILFGVKDEP…QFLKVLGSYP (78 aa)).

It localises to the cytoplasm. It carries out the reaction chorismate = prephenate. The catalysed reaction is prephenate + H(+) = 3-phenylpyruvate + CO2 + H2O. The protein operates within amino-acid biosynthesis; L-phenylalanine biosynthesis; phenylpyruvate from prephenate: step 1/1. Its pathway is metabolic intermediate biosynthesis; prephenate biosynthesis; prephenate from chorismate: step 1/1. Its function is as follows. Catalyzes the Claisen rearrangement of chorismate to prephenate and the decarboxylation/dehydration of prephenate to phenylpyruvate. In Aquifex aeolicus (strain VF5), this protein is Bifunctional chorismate mutase/prephenate dehydratase (pheA).